A 766-amino-acid polypeptide reads, in one-letter code: Pentatricopeptide repeat-containing protein At5g28460 (766 aa).

PPR repeat units follow at residues Thr151–Asn181, Asn184–Phe218, Asn221–Pro257, Asn258–Leu292, Glu293–Pro327, Asp328–Lys358, Asp369–Pro404, Asn405–Pro439, Asn440–Gly474, Asn475–Pro509, Asp510–Leu544, Asp545–Pro579, Asp580–Pro614, Thr615–Pro650, Asn651–Pro685, and Asn686–Pro720.

Belongs to the PPR family. P subfamily.

The sequence is that of Pentatricopeptide repeat-containing protein At5g28460 from Arabidopsis thaliana (Mouse-ear cress).